A 244-amino-acid polypeptide reads, in one-letter code: tRNA pseudouridine synthase C (244 aa).

The active site involves D54.

It belongs to the pseudouridine synthase RluA family.

The catalysed reaction is uridine(65) in tRNA = pseudouridine(65) in tRNA. Responsible for synthesis of pseudouridine from uracil-65 in transfer RNAs. In Vibrio cholerae serotype O1 (strain ATCC 39315 / El Tor Inaba N16961), this protein is tRNA pseudouridine synthase C (truC).